A 286-amino-acid chain; its full sequence is uncharacterized protein (286 aa).

An Integrase catalytic domain is found at 1–146 (MSRYKKDNDG…KPVDVERGDF (146 aa)). Residues 252–263 (RKVKAKKGKKDK) are compositionally biased toward basic residues. Residues 252–286 (RKVKAKKGKKDKKLKESKKSDDTSTGASTGSSIAM) are disordered. Residues 264 to 273 (KLKESKKSDD) are compositionally biased toward basic and acidic residues. The segment covering 274–286 (TSTGASTGSSIAM) has biased composition (low complexity).

This is an uncharacterized protein from Caenorhabditis elegans.